Reading from the N-terminus, the 302-residue chain is Arginase (302 aa).

H103, D126, H128, and D130 together coordinate Mn(2+). Residues 128–132 (HGDLN), 139–141 (SGN), and D180 contribute to the substrate site. 2 residues coordinate Mn(2+): D229 and D231. Substrate contacts are provided by T243 and E274.

It belongs to the arginase family. Mn(2+) is required as a cofactor.

The enzyme catalyses L-arginine + H2O = urea + L-ornithine. Its pathway is nitrogen metabolism; urea cycle; L-ornithine and urea from L-arginine: step 1/1. The polypeptide is Arginase (arg) (Staphylococcus aureus (strain COL)).